The sequence spans 538 residues: CTP synthase (538 aa).

The interval 1–267 (MDRAKFIFVT…LTPIARRFNL (267 aa)) is amidoligase domain. Residue serine 15 participates in CTP binding. Serine 15 contributes to the UTP binding site. ATP-binding positions include 16–21 (SLGKGI) and aspartate 73. Aspartate 73 and glutamate 141 together coordinate Mg(2+). CTP is bound by residues 148 to 150 (DME), 188 to 193 (KTKPTQ), and lysine 224. Residues 188–193 (KTKPTQ) and lysine 224 each bind UTP. Positions 292–538 (KIGFVGKYLS…DFIKSALSKS (247 aa)) constitute a Glutamine amidotransferase type-1 domain. Position 351 (glycine 351) interacts with L-glutamine. The active-site Nucleophile; for glutamine hydrolysis is cysteine 378. Residues 379-382 (LGMQ), glutamate 402, and arginine 469 each bind L-glutamine. Active-site residues include histidine 513 and glutamate 515.

The protein belongs to the CTP synthase family. As to quaternary structure, homotetramer.

The catalysed reaction is UTP + L-glutamine + ATP + H2O = CTP + L-glutamate + ADP + phosphate + 2 H(+). The enzyme catalyses L-glutamine + H2O = L-glutamate + NH4(+). It carries out the reaction UTP + NH4(+) + ATP = CTP + ADP + phosphate + 2 H(+). The protein operates within pyrimidine metabolism; CTP biosynthesis via de novo pathway; CTP from UDP: step 2/2. With respect to regulation, allosterically activated by GTP, when glutamine is the substrate; GTP has no effect on the reaction when ammonia is the substrate. The allosteric effector GTP functions by stabilizing the protein conformation that binds the tetrahedral intermediate(s) formed during glutamine hydrolysis. Inhibited by the product CTP, via allosteric rather than competitive inhibition. Catalyzes the ATP-dependent amination of UTP to CTP with either L-glutamine or ammonia as the source of nitrogen. Regulates intracellular CTP levels through interactions with the four ribonucleotide triphosphates. The sequence is that of CTP synthase from Helicobacter pylori (strain HPAG1).